A 114-amino-acid chain; its full sequence is SOSS complex subunit C homolog (114 aa).

The segment covering 1–10 (MAFQQHGNQE) has biased composition (polar residues). Positions 1–61 (MAFQQHGNQE…AGNTSASRIH (61 aa)) are disordered.

Belongs to the SOSS-C family.

The chain is SOSS complex subunit C homolog from Nematostella vectensis (Starlet sea anemone).